A 305-amino-acid polypeptide reads, in one-letter code: NK1 transcription factor-related protein 2 (305 aa).

2 disordered regions span residues 51–158 (EEVE…KPRR) and 210–257 (KWKK…PGAL). Acidic residues predominate over residues 87 to 96 (SEAEEEEEAE). Basic and acidic residues predominate over residues 97 to 115 (DAGRAHQPERWQGVHEGSP). The segment covering 129-140 (AEGLPASPGSPG) has biased composition (low complexity). The segment at residues 156–215 (PRRARTAFTYEQLVALENKFRATRYLSVCERLNLALSLSLTETQVKIWFQNRRTKWKKQN) is a DNA-binding region (homeobox).

The protein belongs to the NK-1 homeobox family. As to quaternary structure, interacts (via the homeodomain) with HIPK1, HIPK2, and HIPK3. Post-translationally, phosphorylated by HIPK2 in vitro. As to expression, expression detected in the brain, testis and spleen. In the testis, expressed in the germ cells of the seminiferous epithelium, predominantly in elongating spermatids and spermatozoa. Expressed throughout the brain with highest levels in regions of the cerebral cortex, hippocampus, diencephalon, pons, medulla and cerebellum.

The protein resides in the nucleus. The protein localises to the nucleolus. Its function is as follows. Transcriptional repressor. May play a role in early development as a Wnt/beta-catenin effector, hence controlling pluripotency and preimplantation development of embryonic stem cells. May promote adipogenesis in mesenchymal stem cells, possibly by inhibiting the expression of the antiadipogenic factor NR2F2. May inhibit osteoblastogenic differentiation. This Mus musculus (Mouse) protein is NK1 transcription factor-related protein 2 (Nkx1-2).